The following is a 506-amino-acid chain: ESX-5 secretion system ATPase EccB5 (506 aa).

The helical transmembrane segment at valine 56 to isoleucine 76 threads the bilayer.

Belongs to the EccB family. In terms of assembly, part of the ESX-5 / type VII secretion system (T7SS), which is composed of cytosolic and membrane components. The ESX-5 membrane complex is composed of EccB5, EccC5, EccD5 and EccE5.

The protein resides in the cell inner membrane. Its function is as follows. An ATPase. Part of the ESX-5 specialized secretion system, which is responsible for the secretion of EsxN and a number of PE_PGRS and PPE proteins, including PPE41. In Mycobacterium tuberculosis (strain CDC 1551 / Oshkosh), this protein is ESX-5 secretion system ATPase EccB5.